A 358-amino-acid polypeptide reads, in one-letter code: Chorismate synthase (358 aa).

The tract at residues 39-61 (ADIQPFLDKRRPGQSRHTTQRQE) is disordered. Residues arginine 48 and arginine 54 each coordinate NADP(+). Residues 125 to 127 (RSS), 237 to 238 (NA), glycine 284, 299 to 303 (KPTSS), and arginine 325 contribute to the FMN site.

It belongs to the chorismate synthase family. In terms of assembly, homotetramer. FMNH2 is required as a cofactor.

It catalyses the reaction 5-O-(1-carboxyvinyl)-3-phosphoshikimate = chorismate + phosphate. The protein operates within metabolic intermediate biosynthesis; chorismate biosynthesis; chorismate from D-erythrose 4-phosphate and phosphoenolpyruvate: step 7/7. Functionally, catalyzes the anti-1,4-elimination of the C-3 phosphate and the C-6 proR hydrogen from 5-enolpyruvylshikimate-3-phosphate (EPSP) to yield chorismate, which is the branch point compound that serves as the starting substrate for the three terminal pathways of aromatic amino acid biosynthesis. This reaction introduces a second double bond into the aromatic ring system. This is Chorismate synthase from Sphingopyxis alaskensis (strain DSM 13593 / LMG 18877 / RB2256) (Sphingomonas alaskensis).